Reading from the N-terminus, the 82-residue chain is ATP synthase subunit c (82 aa).

Helical transmembrane passes span 3–23 and 57–77; these read PLIA…ASLG and LAFM…LLFA.

As to quaternary structure, F-type ATPases have 2 components, F(1) - the catalytic core - and F(0) - the membrane proton channel. F(1) has five subunits: alpha(3), beta(3), gamma(1), delta(1), epsilon(1). F(0) has four main subunits: a(1), b(1), b'(1) and c(10-14). The alpha and beta chains form an alternating ring which encloses part of the gamma chain. F(1) is attached to F(0) by a central stalk formed by the gamma and epsilon chains, while a peripheral stalk is formed by the delta, b and b' chains.

It is found in the cellular thylakoid membrane. Inhibited by dicyclohexylcarbodiimide. In terms of biological role, f(1)F(0) ATP synthase produces ATP from ADP in the presence of a proton or sodium gradient. F-type ATPases consist of two structural domains, F(1) containing the extramembraneous catalytic core and F(0) containing the membrane proton channel, linked together by a central stalk and a peripheral stalk. During catalysis, ATP synthesis in the catalytic domain of F(1) is coupled via a rotary mechanism of the central stalk subunits to proton translocation. Key component of the F(0) channel; it plays a direct role in translocation across the membrane. A homomeric c-ring of between 10-14 subunits forms the central stalk rotor element with the F(1) delta and epsilon subunits. Functionally, the complex from the organism is particularly stable to disruption and remains functional after 6 hrs at 55 degrees Celsius. This is ATP synthase subunit c (atpE) from Thermosynechococcus vestitus (strain NIES-2133 / IAM M-273 / BP-1).